The chain runs to 309 residues: Porphobilinogen deaminase (309 aa).

Cys241 carries the post-translational modification S-(dipyrrolylmethanemethyl)cysteine.

The protein belongs to the HMBS family. Monomer. It depends on dipyrromethane as a cofactor.

The catalysed reaction is 4 porphobilinogen + H2O = hydroxymethylbilane + 4 NH4(+). It functions in the pathway porphyrin-containing compound metabolism; protoporphyrin-IX biosynthesis; coproporphyrinogen-III from 5-aminolevulinate: step 2/4. In terms of biological role, tetrapolymerization of the monopyrrole PBG into the hydroxymethylbilane pre-uroporphyrinogen in several discrete steps. The polypeptide is Porphobilinogen deaminase (Bacillus cereus (strain AH820)).